A 304-amino-acid polypeptide reads, in one-letter code: MGQCVTKCKNPSSTLGSKNGDREPSNKSHSRRGAGHREEQVPPCGKPGGDILVNGTKKAEAATEACQLPTSSGDAGRESKSNAEESSLQRLEELFRRYKDEREDAILEEGMERFCNDLCVDPTEFRVLLLAWKFQAATMCKFTRKEFFDGCKAISADSIDGICARFPSLLTEAKQEDKFKDLYRFTFQFGLDSEEGQRSLHREIAIALWKLVFTQNNPPVLDQWLNFLTENPSGIKGISRDTWNMFLNFTQVIGPDLSNYSEDEAWPSLFDTFVEWEMERRKREGEGRGALSSGPEGLCPEEQT.

2 disordered regions span residues 1–86 (MGQC…AEES) and 284–304 (EGEGRGALSSGPEGLCPEEQT). Gly2 carries N-myristoyl glycine lipidation. Residues 86-278 (SSLQRLEELF…LFDTFVEWEM (193 aa)) enclose the DCUN1 domain.

In terms of assembly, part of a complex containing DCUN1D3, CUL3 and RBX1. Interacts (via the DCUN1 domain) with the unneddylated cullins: interacts with CUL1, CUL2, CUL3, CUL4A, CUL4B and CUL5; these interactions promote the cullin neddylation and the identity of the cullin dictates the affinity of the interaction. Interacts preferentially with CUL3; this interaction triggers the relocalization of CUL3 to the cell membrane where CUL3 is neddylated. Interacts (via DCUN1 domain) with RBX1. May also interact with regulators or subunits of cullin-RING ligases such as RNF7, ELOB and DDB1; these interactions are bridged by cullins. Interacts (via DCUN1 domain) with CAND1; this interaction is bridged by cullins and strongly inhibits cullin neddylation. These CAND-cullin-DCNL complexes can only be neddylated in the presence of a substrate adapter. Interacts (via DCUN1 domain) with the N-terminally acetylated form of UBE2M and UBE2F. As to expression, tends to be down-regulated in different type of cancers, including lung neuroendocrine carcinoma, thyroid Huerthle cell carcinoma and lung squamous cell carcinoma. Mostly expressed in testis and brain. Highly expressed in liver, bladder and renal normal tissue than their tumor tissue counterparts. Palmitoylation stabilizes DCUN1D3 at the cell membrane.

It is found in the cell membrane. Its subcellular location is the cytoplasm. The protein resides in the nucleus. The protein localises to the perinuclear region. In terms of biological role, contributes to the neddylation of all cullins by transferring NEDD8 from N-terminally acetylated NEDD8-conjugating E2s enzyme to different cullin C-terminal domain-RBX complexes and may play a role in the cell cycle progression by regulating the SCF ubiquitin E3 ligase complex, after UV damage. At the cell membrane, can promote and as well inhibit cullins neddylation. This is DCN1-like protein 3 from Homo sapiens (Human).